The chain runs to 132 residues: Small ribosomal subunit protein uS11 (132 aa).

The disordered stretch occupies residues 1 to 21 (MAAPKSAVRKPRRKDKKNIAV). Residues 7–16 (AVRKPRRKDK) are compositionally biased toward basic residues.

Belongs to the universal ribosomal protein uS11 family. Part of the 30S ribosomal subunit. Interacts with proteins S7 and S18. Binds to IF-3.

Its function is as follows. Located on the platform of the 30S subunit, it bridges several disparate RNA helices of the 16S rRNA. Forms part of the Shine-Dalgarno cleft in the 70S ribosome. The chain is Small ribosomal subunit protein uS11 from Clavibacter sepedonicus (Clavibacter michiganensis subsp. sepedonicus).